The chain runs to 251 residues: Endonuclease NucS (251 aa).

Residues 230–240 are compositionally biased toward basic and acidic residues; that stretch reads LEPPKKGNEKR. The disordered stretch occupies residues 230–251; sequence LEPPKKGNEKRSKQKTLDFFTP.

Belongs to the NucS endonuclease family. Homodimer. Interacts with PCNA.

It localises to the cytoplasm. With respect to regulation, activity is modulated by PCNA. PCNA increases the binding affinity of NucS towards ssDNA as well as branched DNA substrates carrying either 3' or 5' flaps. PCNA is also required for optimal loading of NucS on its substrates and to direct activity towards ss/dsDNA junction. Functionally, cleaves both 3' and 5' ssDNA extremities of branched DNA structures. Binds to ssDNA. The polypeptide is Endonuclease NucS (Pyrococcus abyssi (strain GE5 / Orsay)).